The primary structure comprises 53 residues: uncharacterized protein (53 aa).

Residues 28–45 form a helical membrane-spanning segment; it reads AIVFSLAVFGIVEAYYYW.

The protein resides in the host membrane. This is an uncharacterized protein from Acidianus convivator (ABV).